The sequence spans 202 residues: MAPVCLFAPLLLLLLGGFPVAPGESIRETEVIDPQDLLEGRYFSGALPDDEDAGGLEQDSDFELSGSGDLDDTEEPRTFPEVISPLVPLDNHIPENAQPGIRVPSEPKELEENEVIPKRVPSDVGDDDVSNKVSMSSTSQGSNIFERTEVLAALIVGGVVGILFAVFLILLLVYRMKKKDEGSYDLGKKPIYKKAPTNEFYA.

An N-terminal signal peptide occupies residues 1–23; the sequence is MAPVCLFAPLLLLLLGGFPVAPG. Residues 24–149 are Extracellular-facing; it reads ESIRETEVID…QGSNIFERTE (126 aa). 2 disordered regions span residues 42 to 76 and 89 to 138; these read YFSG…TEEP and LDNH…MSST. An O-linked (Xyl...) (glycosaminoglycan) serine glycan is attached at Ser-44. Residues 48–62 are compositionally biased toward acidic residues; that stretch reads PDDEDAGGLEQDSDF. O-linked (Xyl...) (glycosaminoglycan) serine glycans are attached at residues Ser-65 and Ser-67. Positions 105–121 are enriched in basic and acidic residues; the sequence is SEPKELEENEVIPKRVP. Residues 150–174 form a helical membrane-spanning segment; it reads VLAALIVGGVVGILFAVFLILLLVY. Residues 175–202 lie on the Cytoplasmic side of the membrane; the sequence is RMKKKDEGSYDLGKKPIYKKAPTNEFYA.

It belongs to the syndecan proteoglycan family. Homodimer. Interacts with CDCP1 and SDCBP. Interacts (via its cytoplasmic domain) with GIPC (via its PDZ domain). Interacts (via its cytoplasmic domain) with NUDT16L1. Interacts with DNM2; this interaction is markedly enhanced at focal ahesion site upon induction of focal adhesions and stress-fiber formation. Shedding is enhanced by a number of factors such as heparanase, thrombin or EGF. Also by stress and wound healing. PMA-mediated shedding is inhibited by TIMP3. In terms of processing, O-glycosylated; contains both chondroitin sulfate and heparan sulfate. Ser-44, Ser-65 and Ser-67 can all be modified by either chondroitin sulfate or heparan sulfate, and the protein exists in forms that contain only chondroitin sulfate, only heparan sulfate and both chondroitin sulfate and heparan sulfate.

Its subcellular location is the membrane. The protein localises to the secreted. Its function is as follows. Cell surface proteoglycan which regulates exosome biogenesis in concert with SDCBP and PDCD6IP. The polypeptide is Syndecan-4 (Rattus norvegicus (Rat)).